A 157-amino-acid polypeptide reads, in one-letter code: Endoribonuclease YbeY (157 aa).

3 residues coordinate Zn(2+): His-111, His-115, and His-121. Residues 136–157 (ELLAELGHPDPYADDETDSITH) are disordered. A compositionally biased stretch (acidic residues) spans 147–157 (YADDETDSITH).

This sequence belongs to the endoribonuclease YbeY family. It depends on Zn(2+) as a cofactor.

It is found in the cytoplasm. Its function is as follows. Single strand-specific metallo-endoribonuclease involved in late-stage 70S ribosome quality control and in maturation of the 3' terminus of the 16S rRNA. The polypeptide is Endoribonuclease YbeY (Pseudomonas putida (strain ATCC 700007 / DSM 6899 / JCM 31910 / BCRC 17059 / LMG 24140 / F1)).